A 274-amino-acid polypeptide reads, in one-letter code: uncharacterized protein (274 aa).

It belongs to the type II cytokine receptor family.

This is an uncharacterized protein from Sus scrofa (Pig).